The primary structure comprises 1940 residues: Myosin-2 (1940 aa).

Positions 33–82 (DAKTSVFVAEPKESFVKGTVQSREGGKVTVKTEAGATLTVKEDQVFPMNP) constitute a Myosin N-terminal SH3-like domain. T64 and T69 each carry phosphothreonine. The Myosin motor domain occupies 86 to 783 (DKIEDMAMMT…LLGLLEEMRD (698 aa)). Position 130 is an N6,N6,N6-trimethyllysine (K130). Residue 179 to 186 (GESGAGKT) coordinates ATP. Y389 carries the phosphotyrosine modification. A Phosphoserine modification is found at S392. The residue at position 419 (T419) is a Phosphothreonine. At S625 the chain carries Phosphoserine. The segment at 660–682 (LNKLMTNLRSTHPHFVRCIIPNE) is actin-binding. H758 bears the Pros-methylhistidine mark. An actin-binding region spans residues 762-776 (KFGHTKVFFKAGLLG). In terms of domain architecture, IQ spans 786-815 (LAQLITRTQARCRGFLARVEYQKMVERRES). Positions 844–1940 (LLKSAETEKE…EVHTKVISEE (1097 aa)) form a coiled coil. Residues S1093, S1097, S1163, and S1238 each carry the phosphoserine modification. A disordered region spans residues 1154 to 1173 (RLEEAGGATSAQIEMNKKRE). T1242 bears the Phosphothreonine mark. S1244 bears the Phosphoserine mark. The residue at position 1256 (T1256) is a Phosphothreonine. A Phosphoserine modification is found at S1262. T1287 is modified (phosphothreonine). A phosphoserine mark is found at S1289, S1293, S1304, and S1307. A Phosphotyrosine modification is found at Y1465. The residue at position 1468 (T1468) is a Phosphothreonine. A Phosphoserine modification is found at S1475. Y1493 is modified (phosphotyrosine). Residue S1496 is modified to Phosphoserine. A Phosphothreonine modification is found at T1502. S1515 carries the phosphoserine modification. T1518 is modified (phosphothreonine). S1543, S1555, S1575, S1601, S1715, and S1727 each carry phosphoserine. 2 positions are modified to phosphothreonine: T1731 and T1737. A Phosphoserine modification is found at S1740. The interval 1884-1920 (KRQAEEAEEQSNTNLSKFRKLQHELEEAEERADIAES) is disordered.

This sequence belongs to the TRAFAC class myosin-kinesin ATPase superfamily. Myosin family. Muscle myosin is a hexameric protein that consists of 2 heavy chain subunits (MHC), 2 alkali light chain subunits (MLC) and 2 regulatory light chain subunits (MLC-2). Interacts with GCSAM.

It is found in the cytoplasm. Its subcellular location is the myofibril. Its function is as follows. Myosins are actin-based motor molecules with ATPase activity essential for muscle contraction. This chain is Myosin-2 (MYH2), found in Canis lupus familiaris (Dog).